The following is a 42-amino-acid chain: Photosystem II reaction center protein J (42 aa).

A helical membrane pass occupies residues isoleucine 10 to phenylalanine 30.

Belongs to the PsbJ family. As to quaternary structure, PSII is composed of 1 copy each of membrane proteins PsbA, PsbB, PsbC, PsbD, PsbE, PsbF, PsbH, PsbI, PsbJ, PsbK, PsbL, PsbM, PsbT, PsbY, PsbZ, Psb30/Ycf12, at least 3 peripheral proteins of the oxygen-evolving complex and a large number of cofactors. It forms dimeric complexes.

The protein localises to the plastid. It is found in the chloroplast thylakoid membrane. In terms of biological role, this protein is a component of the reaction center of photosystem II. One of the components of the core complex of photosystem II (PSII). PSII is a light-driven water:plastoquinone oxidoreductase that uses light energy to abstract electrons from H(2)O, generating O(2) and a proton gradient subsequently used for ATP formation. It consists of a core antenna complex that captures photons, and an electron transfer chain that converts photonic excitation into a charge separation. The polypeptide is Photosystem II reaction center protein J (Euglena gracilis).